The primary structure comprises 585 residues: Organic cation transporter 1 (585 aa).

Residues Met-1 to Gln-40 are Cytoplasmic-facing. A helical membrane pass occupies residues Ile-41–Asn-61. Residues Ile-62 to Glu-155 are Extracellular-facing. N-linked (GlcNAc...) asparagine glycosylation is found at Asn-87, Asn-98, and Asn-133. The chain crosses the membrane as a helical span at residues Ile-156–Ala-176. The Cytoplasmic portion of the chain corresponds to Asp-177–Ser-184. A helical transmembrane segment spans residues Phe-185–Ile-205. Residues Glu-206 to Arg-212 are Extracellular-facing. A helical membrane pass occupies residues Phe-213–Phe-233. At Met-234–Gly-243 the chain is on the cytoplasmic side. The chain crosses the membrane as a helical span at residues Leu-244–Ile-264. Residues Arg-265–Gln-269 are Extracellular-facing. Residues Leu-270 to Glu-290 traverse the membrane as a helical segment. The Cytoplasmic segment spans residues Ser-291–Thr-360. Residues Leu-361–Val-381 traverse the membrane as a helical segment. Over Ser-382–Tyr-389 the chain is Extracellular. Residues Trp-390–Leu-410 traverse the membrane as a helical segment. The Cytoplasmic segment spans residues Gln-411–Arg-416. Residues Trp-417 to Pro-437 form a helical membrane-spanning segment. The Extracellular portion of the chain corresponds to Asp-438–Ser-446. A helical membrane pass occupies residues Ala-447–Gly-467. At Glu-468 to Ala-476 the chain is on the cytoplasmic side. A helical transmembrane segment spans residues Ile-477 to Val-497. Topologically, residues Asn-498 to Lys-504 are extracellular. A helical membrane pass occupies residues Ile-505–Leu-525. At Pro-526–Ile-585 the chain is on the cytoplasmic side. Residues Gly-544–Ile-585 form a disordered region. Over residues Arg-575–Ile-585 the composition is skewed to basic residues.

This sequence belongs to the major facilitator (TC 2.A.1) superfamily. Organic cation transporter (TC 2.A.1.19) family.

Its subcellular location is the membrane. Its function is as follows. Transports organic cations such as tetraethylammonium (TEA). Displays a broad substrate specificity. This is Organic cation transporter 1 (oct-1) from Caenorhabditis elegans.